The chain runs to 104 residues: MAIVKVTDSNFDENIQSGVKLVDFWATWCGPCKMIAPVLEELAGDYDGKADILKLDVDENPSTAAKFEVMSIPTLIVFKDGEPVDKVVGFQPKENLAEVLDKHL.

A Thioredoxin domain is found at 2–104; the sequence is AIVKVTDSNF…NLAEVLDKHL (103 aa). A disulfide bridge connects residues cysteine 29 and cysteine 32.

Belongs to the thioredoxin family.

Component of the thioredoxin-thioredoxin reductase system. Participates in various redox reactions through the reversible oxidation of its active center dithiol to a disulfide and catalyzes dithiol-disulfide exchange reactions. The polypeptide is Thioredoxin (trxA) (Staphylococcus haemolyticus (strain JCSC1435)).